A 522-amino-acid polypeptide reads, in one-letter code: Probable poly(ADP-ribose) glycohydrolase 2 (522 aa).

The protein belongs to the poly(ADP-ribose) glycohydrolase family.

The catalysed reaction is [(1''-&gt;2')-ADP-alpha-D-ribose](n) + H2O = [(1''-&gt;2')-ADP-alpha-D-ribose](n-1) + ADP-D-ribose. In terms of biological role, poly(ADP-ribose) synthesized after DNA damage is only present transiently and is rapidly degraded by poly(ADP-ribose) glycohydrolase. This chain is Probable poly(ADP-ribose) glycohydrolase 2 (PARG2), found in Arabidopsis thaliana (Mouse-ear cress).